Here is a 529-residue protein sequence, read N- to C-terminus: Glucocorticoid modulatory element-binding protein 2 (529 aa).

Residues Glu80–Asp162 form the SAND domain. Cys109 is a binding site for Zn(2+). Lys135, Lys139, Lys142, and Arg153 together coordinate DNA. Lys154 is covalently cross-linked (Glycyl lysine isopeptide (Lys-Gly) (interchain with G-Cter in SUMO1); alternate). Residue Lys154 forms a Glycyl lysine isopeptide (Lys-Gly) (interchain with G-Cter in SUMO2); alternate linkage. Zn(2+)-binding residues include His166, Cys170, and Cys174. Residues Leu244 to Thr347 are a coiled coil. Position 372 is a phosphoserine (Ser372).

Homodimer, and heterodimer of GMEB1 and GMEB2. Interacts with the glucocorticoid receptor (NR3C1). May interact with CREB-binding protein (CBP).

Its subcellular location is the nucleus. It is found in the cytoplasm. Functionally, trans-acting factor that binds to glucocorticoid modulatory elements (GME) present in the TAT (tyrosine aminotransferase) promoter and increases sensitivity to low concentrations of glucocorticoids. Also binds to the transferrin receptor promoter. In Rattus norvegicus (Rat), this protein is Glucocorticoid modulatory element-binding protein 2 (Gmeb2).